Consider the following 693-residue polypeptide: CREB-regulated transcription coactivator 2 (693 aa).

The segment covering 1-20 (MATSGANGPGSATASASNPR) has biased composition (polar residues). The segment at 1 to 30 (MATSGANGPGSATASASNPRKFSEKIALQK) is disordered. Residue Ala2 is modified to N-acetylalanine. Position 51 is an asymmetric dimethylarginine; by PRMT6 (Arg51). A phosphoserine mark is found at Ser70, Ser86, and Ser90. An asymmetric dimethylarginine; by PRMT6 mark is found at Arg99, Arg120, and Arg123. Ser136 carries the phosphoserine modification. Asymmetric dimethylarginine; by PRMT6 occurs at positions 161 and 168. Thr169 bears the Phosphothreonine mark. Ser171 is modified (phosphoserine; by AMPK, MARK2, SIK1 and SIK2). Phosphothreonine is present on Thr192. A Glycyl lysine isopeptide (Lys-Gly) (interchain with G-Cter in SUMO2) cross-link involves residue Lys234. The short motif at 271–287 (TGGSLPDLTNLHFPPPL) is the Nuclear export signal element. Ser274 carries the post-translational modification Phosphoserine; by MARK2. Disordered regions lie at residues 282–306 (HFPP…GGNS) and 328–554 (GYDA…MSDF). Residues Ser306, Ser368, Ser393, Ser433, and Ser456 each carry the phosphoserine modification. Low complexity-rich tracts occupy residues 331 to 378 (APGL…SSLA) and 386 to 415 (SLGH…GAPS). The segment covering 447 to 468 (SQQQLPKQFSPTMSPTLSSITQ) has biased composition (polar residues). Position 488 is a phosphotyrosine (Tyr488). Residues Ser489, Ser490, and Ser492 each carry the phosphoserine modification. The span at 498–507 (QPHTPKSLQQ) shows a compositional bias: polar residues. Phosphothreonine is present on Thr501. Over residues 509 to 529 (GLPSQSCSVQSSGGQPPGRQS) the composition is skewed to low complexity. Phosphoserine occurs at positions 613, 623, and 624.

Belongs to the TORC family. In terms of assembly, binds, as a tetramer, through its N-terminal region, with the bZIP domain of CREB1. 'Arg-314' in the bZIP domain of CREB1 is essential for this interaction. Interaction, via its C-terminal, with TAF4, enhances recruitment of TAF4 to CREB1. Interacts with SIK2. Interacts with 14-3-3 proteins, YWHAB and YWHAG. Interacts (probably when phosphorylated at Ser-171) with YWHAE. Interacts with calmodulin-dependent catalytic subunit PPP3CA/calcineurin A. Interaction with COP1 mediates nuclear export and degradation of CRTC2. (Microbial infection) Interaction with the human T-cell leukemia virus type 1 (HTLV-1) Tax protein is essential for optimal transcription activation by Tax. Post-translationally, phosphorylation/dephosphorylation states of Ser-171 are required for regulating transduction of CREB activity. CRTCs/TORCs are inactive when phosphorylated, and active when dephosphorylated at this site. This primary site of phosphorylation, is regulated by cAMP and calcium levels and is dependent on the phosphorylation of SIKs (SIK1 and SIK2) by LKB1. Following adenylyl cyclase activation, dephosphorylated at Ser-171 by PPP3CA/calcineurin A resulting in CRTC2 dissociation from 14-3-3 proteins and PPP3CA. Both insulin and AMPK increase this phosphorylation of CRTC2 while glucagon suppresses it. Phosphorylation at Ser-274 by MARK2 is induced under low glucose conditions and dephosphorylated in response to glucose influx. Phosphorylation at Ser-274 promotes interaction with 14-3-3 proteins and translocation to the cytoplasm. Asymmetric dimethylation of arginine resisues by PRMT6 enhances the association of CRTC2 with CREB on the promoters of gluconeogenic genes. As to expression, most abundantly expressed in the thymus. Present in both B and T-lymphocytes. Highly expressed in HEK293T cells and in insulinomas. High levels also in spleen, ovary, muscle and lung, with highest levels in muscle. Lower levels found in brain, colon, heart, kidney, prostate, small intestine and stomach. Weak expression in liver and pancreas.

It localises to the cytoplasm. It is found in the nucleus. In terms of biological role, transcriptional coactivator for CREB1 which activates transcription through both consensus and variant cAMP response element (CRE) sites. Acts as a coactivator, in the SIK/TORC signaling pathway, being active when dephosphorylated and acts independently of CREB1 'Ser-133' phosphorylation. Enhances the interaction of CREB1 with TAF4. Regulates gluconeogenesis as a component of the LKB1/AMPK/TORC2 signaling pathway. Regulates the expression of specific genes such as the steroidogenic gene, StAR. Potent coactivator of PPARGC1A and inducer of mitochondrial biogenesis in muscle cells. Also coactivator for TAX activation of the human T-cell leukemia virus type 1 (HTLV-1) long terminal repeats (LTR). In Homo sapiens (Human), this protein is CREB-regulated transcription coactivator 2 (CRTC2).